A 353-amino-acid polypeptide reads, in one-letter code: Peptide chain release factor 1 (353 aa).

Glutamine 230 is modified (N5-methylglutamine).

This sequence belongs to the prokaryotic/mitochondrial release factor family. Post-translationally, methylated by PrmC. Methylation increases the termination efficiency of RF1.

The protein localises to the cytoplasm. Functionally, peptide chain release factor 1 directs the termination of translation in response to the peptide chain termination codons UAG and UAA. The sequence is that of Peptide chain release factor 1 from Gluconobacter oxydans (strain 621H) (Gluconobacter suboxydans).